The chain runs to 67 residues: Penaeidin-4a (67 aa).

An N-terminal signal peptide occupies residues 1 to 19; sequence MRLVVCLVFLASFALVCQG. Intrachain disulfides connect Cys-42/Cys-56, Cys-45/Cys-63, and Cys-57/Cys-64. Arg-66 bears the Arginine amide mark.

It belongs to the penaeidin family.

Its subcellular location is the cytoplasmic granule. In terms of biological role, antibacterial and antifungal activity. Presents chitin-binding activity. This Penaeus vannamei (Whiteleg shrimp) protein is Penaeidin-4a.